Here is a 716-residue protein sequence, read N- to C-terminus: Zinc finger protein 840 (716 aa).

One can recognise a KRAB domain in the interval 42–113 (VRFRDVAVVF…EREVTGDPCP (72 aa)). C2H2-type zinc fingers lie at residues 151–173 (YECD…QKIH), 207–229 (FECN…QSMH), 235–257 (YKCD…QRFH), 277–299 (FSCN…LLIH), 305–327 (YTCN…QRTH), 333–355 (HKCD…QKTH), 361–383 (FSCN…QQIH), 389–411 (FICS…KGTH), 417–439 (YQCT…QKTH), 445–467 (FACN…KKIH), 473–495 (YECG…KKIH), 501–523 (FVCN…QRTH), 549–571 (FPCN…QQIH), 577–599 (FICS…KGTH), 605–627 (YQCT…QKTH), 633–655 (FTCN…KKIH), 661–683 (YECG…KKIH), and 689–711 (FVCN…QITH). Residues 515–548 (KLSRHQRTHNKKENSSKSVSNLNKHQKTHAGEKP) form a disordered region.

It belongs to the krueppel C2H2-type zinc-finger protein family.

The protein resides in the nucleus. In terms of biological role, may be involved in transcriptional regulation. The polypeptide is Zinc finger protein 840 (ZNF840P) (Homo sapiens (Human)).